Reading from the N-terminus, the 129-residue chain is GEL complex subunit OPTI (129 aa).

Topologically, residues 1–44 are cytoplasmic; the sequence is MSGGRRKEEPPQPQLANGALKVSVWSKVLRSDAAWEDKDEFLDV. A helical transmembrane segment spans residues 45-65; the sequence is IYWFRQIIAVVLGVIWGVLPL. Position 66 (Arg-66) is a topological domain, lumenal. A helical membrane pass occupies residues 67-84; that stretch reads GFLGIAGFCVINAGVLYL. Residues 85–103 lie on the Cytoplasmic side of the membrane; sequence YFSNYLQIDEEEYGGTWEL. A helical transmembrane segment spans residues 104 to 127; sequence TKEGFMTSFALFMVIWIIFYTAIH. At 128-129 the chain is on the lumenal side; it reads YD.

The protein belongs to the EMC6 family. In terms of assembly, component of the GET- and EMC-like (GEL) complex, composed of RAB5IF/OPTI and TMCO1. The GEL complex is part of the multi-pass translocon (MPT) complex, composed of three subcomplexes, the GEL complex (composed of RAB5IF/OPTI and TMCO1), the BOS complex (composed of NCLN/Nicalin, NOMO1 and TMEM147) and the PAT complex (composed of WDR83OS/Asterix and CCDC47). The MPT complex associates with the SEC61 complex. Interacts with NDUFS3, NDUFA4, NDUFV1, NDUFA9 and NDUFS8 of the mitochondrial membrane respiratory chain NADH dehydrogenase (Complex I). Interacts with UQCRC2 of the ubiquinol-cytochrome c reductase complex (Complex III). Interacts with COX5A and COX7C of the cytochrome c oxidase complex (Complex IV).

Its subcellular location is the endoplasmic reticulum membrane. The protein resides in the mitochondrion inner membrane. Its function is as follows. Component of the multi-pass translocon (MPT) complex that mediates insertion of multi-pass membrane proteins into the lipid bilayer of membranes. The MPT complex takes over after the SEC61 complex: following membrane insertion of the first few transmembrane segments of proteins by the SEC61 complex, the MPT complex occludes the lateral gate of the SEC61 complex to promote insertion of subsequent transmembrane regions. Within the MPT complex, the GEL subcomplex may mediate insertion of transmembrane regions into the membrane. In addition to its role in multi-pass membrane insertion, RAB5IF/OPTI also acts as an assembly factor for mitochondrial respiratory complexes. This chain is GEL complex subunit OPTI (RAB5IF), found in Canis lupus familiaris (Dog).